Reading from the N-terminus, the 374-residue chain is Translocating chain-associated membrane protein 1 (374 aa).

The Cytoplasmic segment spans residues 1-29 (MAIRKKSTKSPPVLSHEFVLQNHADIVSC). A helical membrane pass occupies residues 30 to 50 (VAMVFLLGLMFEITAKASIIF). Topologically, residues 51 to 76 (VTLQYNVTLPATEEQATESVSLYYYG) are lumenal. Asn-56 carries an N-linked (GlcNAc...) asparagine glycan. The helical transmembrane segment at 77–97 (IKDLATVFFYMLVAIIIHAVI) threads the bilayer. Over 98–121 (QEYMLDKINRRMHFSKTKHSKFNE) the chain is Cytoplasmic. A TLC domain is found at 117–326 (SKFNESGQLS…NFQLRRWREH (210 aa)). The helical transmembrane segment at 122-142 (SGQLSAFYLFACVWGTFILIS) threads the bilayer. The Lumenal portion of the chain corresponds to 143 to 159 (ENYISDPTILWRAYPHN). A helical transmembrane segment spans residues 160 to 180 (LMTFQMKFFYISQLAYWLHAF). Over 181–192 (PELYFQKTKKED) the chain is Cytoplasmic. A helical transmembrane segment spans residues 193-213 (IPRQLVYIGLYLFHIAGAYLL). Residues 214-217 (NLNH) are Lumenal-facing. A helical transmembrane segment spans residues 218–238 (LGLVLLVLHYFVEFLFHISRL). The Cytoplasmic portion of the chain corresponds to 239-251 (FYFSNEKYQKGFS). Residues 252 to 272 (LWAVLFVLGRLLTLILSVLTV) traverse the membrane as a helical segment. The Lumenal portion of the chain corresponds to 273 to 297 (GFGLARAENQKLDFSTGNFNVLAVR). A helical membrane pass occupies residues 298–318 (IAVLASICVTQAFMMWKFINF). Over 319–374 (QLRRWREHSAFQAPAVKKKPTVTKGRSSKKGTENGVNGTLTSNVADSPRNKKEKSS) the chain is Cytoplasmic. Basic residues predominate over residues 334 to 347 (VKKKPTVTKGRSSK). A disordered region spans residues 334-374 (VKKKPTVTKGRSSKKGTENGVNGTLTSNVADSPRNKKEKSS). Positions 352 to 363 (NGVNGTLTSNVA) are enriched in polar residues. Ser-365 bears the Phosphoserine mark.

Belongs to the TRAM family. As to quaternary structure, interacts with SEC61B. May interact with Derlin-1/DERL1. In terms of assembly, (Microbial infection) Interacts with human cytomegalovirus/HHV-5 proteins US2 and US11. In terms of processing, N-glycosylated.

The protein resides in the endoplasmic reticulum membrane. Functionally, involved in the translocation of nascent protein chains into or through the endoplasmic reticulum (ER) membrane by facilitating the proper chain positioning at the SEC61 channel. Regulates the exposure of nascent secretory protein chain to the cytosol during translocation into the ER. May affect the phospholipid bilayer in the vicinity of the lateral gate of the SEC61 channel, thereby facilitating ER protein transport. Intimately associates with transmembrane (TM) domain of nascent membrane proteins during the entire integration process into the ER membrane. Associates with the second TM domain of G-protein-coupled receptor opsin/OPSD nascent chain in the ER membrane, which may facilitate its integration into the membrane. Under conditions of ER stress, participates in the disposal of misfolded ER membrane proteins during the unfolded protein response (UPR), an integrated stress response (ISR) pathway, by selectively retrotranslocating misfolded ER-membrane proteins from the ER into the cytosol where they are ubiquitinated and degraded by the proteasome. (Microbial infection) In case of cytomegalovirus infection, participates in US2- and US11-mediated ER-to-cytosol retrotranslocation and subsequent degradation of major histocompatibility complex (MHC) class I heavy chains, thereby decreasing the immune detection by cytotoxic T-cells. This is Translocating chain-associated membrane protein 1 from Homo sapiens (Human).